Consider the following 309-residue polypeptide: MPARLGLSAAFRSLSIRTNQLPQQQSIAAAVQARTLITDSTTSSRLPPRVQIQQQQQQRTQPYSTETTPPPNSNNGDLAGIEGQPPVEVTPENAAALSQLSEIAYGVKAADVAIEGHKYGLPTLPLPSELHHKYRYSEVVNHATKLLMKDGKLSKAQRDMAMILNYLRSSPPPKLNPSRPLIPGHPPASHLPLNPVEYLTVAIDSVAPLIKMRGYKGLAGGGRSLEVPQPIPARQRRSTAFKWILDVVNKKPSKGSGRTMFAHRVAEEIVAVVEGRSSVWDKRMLIHKLGTANRANLNSPALQLKGKRF.

The tract at residues 39–86 is disordered; it reads DSTTSSRLPPRVQIQQQQQQRTQPYSTETTPPPNSNNGDLAGIEGQPP. The segment covering 51–61 has biased composition (low complexity); the sequence is QIQQQQQQRTQ.

The protein belongs to the universal ribosomal protein uS7 family. In terms of assembly, component of the mitochondrial small ribosomal subunit (mt-SSU). Mature N.crassa 74S mitochondrial ribosomes consist of a small (37S) and a large (54S) subunit. The 37S small subunit contains a 16S ribosomal RNA (16S mt-rRNA) and 32 different proteins. The 54S large subunit contains a 23S rRNA (23S mt-rRNA) and 42 different proteins.

The protein resides in the mitochondrion. In terms of biological role, component of the mitochondrial ribosome (mitoribosome), a dedicated translation machinery responsible for the synthesis of mitochondrial genome-encoded proteins, including at least some of the essential transmembrane subunits of the mitochondrial respiratory chain. The mitoribosomes are attached to the mitochondrial inner membrane and translation products are cotranslationally integrated into the membrane. The chain is Small ribosomal subunit protein uS7m (rsm7) from Neurospora crassa (strain ATCC 24698 / 74-OR23-1A / CBS 708.71 / DSM 1257 / FGSC 987).